Reading from the N-terminus, the 290-residue chain is TIMELESS-interacting protein (290 aa).

The tract at residues 1 to 59 (MLEPQENGLTDLPDYEHIEDETFPPFPPPASPGREDGEGAEPEEESGRGAPVPVPPKRT) is disordered. The segment at 67–143 (LNAERLISER…KEVQTCLKRI (77 aa)) is interaction with TIMELESS. A phosphoserine mark is found at Ser194 and Ser222. Residues 221–242 (NSQSLGNDLSVNTPSTQTSEAG) show a composition bias toward polar residues. Residues 221–290 (NSQSLGNDLS…VEETQLDQSF (70 aa)) are disordered. 2 positions are modified to phosphothreonine: Thr233 and Thr244.

This sequence belongs to the CSM3 family. As to quaternary structure, interacts with TIMELESS (via N-terminus), which impairs TIMELESS self-association. Associates with the MCM2-7 complex. Interacts with RPA2, PRDX2.

It localises to the cytoplasm. Its subcellular location is the nucleus. In terms of biological role, plays an important role in the control of DNA replication and the maintenance of replication fork stability. Important for cell survival after DNA damage or replication stress. May be specifically required for the ATR-CHEK1 pathway in the replication checkpoint induced by hydroxyurea or ultraviolet light. Forms a complex with TIMELESS and this complex regulates DNA replication processes under both normal and stress conditions, stabilizes replication forks and influences both CHEK1 phosphorylation and the intra-S phase checkpoint in response to genotoxic stress. The chain is TIMELESS-interacting protein (TIPIN) from Bos taurus (Bovine).